Here is a 119-residue protein sequence, read N- to C-terminus: Large ribosomal subunit protein uL22 (119 aa).

This sequence belongs to the universal ribosomal protein uL22 family. As to quaternary structure, part of the 50S ribosomal subunit.

In terms of biological role, this protein binds specifically to 23S rRNA; its binding is stimulated by other ribosomal proteins, e.g. L4, L17, and L20. It is important during the early stages of 50S assembly. It makes multiple contacts with different domains of the 23S rRNA in the assembled 50S subunit and ribosome. Its function is as follows. The globular domain of the protein is located near the polypeptide exit tunnel on the outside of the subunit, while an extended beta-hairpin is found that lines the wall of the exit tunnel in the center of the 70S ribosome. The protein is Large ribosomal subunit protein uL22 of Rickettsia canadensis (strain McKiel).